We begin with the raw amino-acid sequence, 776 residues long: Structure-specific endonuclease subunit SLX4 (776 aa).

Residues 201-217 are compositionally biased toward acidic residues; it reads EEQMVSDDNSSTEDDTD. Disordered regions lie at residues 201-223, 263-283, and 507-531; these read EEQM…QNDG, KSLQ…PDQN, and PPLD…KPHS.

This sequence belongs to the SLX4 family. Forms a heterodimer with SLX1. In terms of processing, phosphorylated in response to DNA damage.

The protein resides in the nucleus. Functionally, regulatory subunit of the SLX1-SLX4 structure-specific endonuclease that resolves DNA secondary structures generated during DNA repair and recombination. Has endonuclease activity towards branched DNA substrates, introducing single-strand cuts in duplex DNA close to junctions with ss-DNA. The protein is Structure-specific endonuclease subunit SLX4 of Candida albicans (strain SC5314 / ATCC MYA-2876) (Yeast).